We begin with the raw amino-acid sequence, 922 residues long: Centrosomal protein of 104 kDa (922 aa).

The stretch at 210-277 (EVAQIIRRLD…DLAKEKKQQM (68 aa)) forms a coiled coil. Residues 307–318 (PLQPLASPSSPQ) show a composition bias toward low complexity. Disordered regions lie at residues 307–333 (PLQP…EELA) and 348–419 (LASS…PLTE). Residues 396–407 (PEVREADSDVRR) show a composition bias toward basic and acidic residues. 2 HEAT repeats span residues 526-564 (AIPL…LQLI) and 601-637 (GFTV…YRQH). Basic and acidic residues-rich tracts occupy residues 673 to 697 (TEAE…EETK) and 714 to 725 (QEKENEAVKLKN). Disordered stretches follow at residues 673-741 (TEAE…TPEI) and 880-922 (PAPQ…HTRR). Residues 678–705 (KTQKRVVTKEAEKQKKEETKALQGLSAA) are a coiled coil.

In terms of assembly, interacts with CCP110 and CEP97. Interacts with ARMC9, TOGARAM1, CCDC66 and CSPP1. Expressed predominantly in the brain. Also detected, although at much lower levels, in the heart and the liver. Within the brain, expressed in the cerebral cortex, hippocampus, cerebellum and brainstem.

It localises to the cell projection. It is found in the cilium. Its subcellular location is the cytoplasm. The protein localises to the cytoskeleton. The protein resides in the microtubule organizing center. It localises to the centrosome. It is found in the centriole. Its subcellular location is the spindle pole. In terms of biological role, required for ciliogenesis and for structural integrity at the ciliary tip. The chain is Centrosomal protein of 104 kDa (Cep104) from Rattus norvegicus (Rat).